Here is an 867-residue protein sequence, read N- to C-terminus: DNA mismatch repair protein MutS (867 aa).

An ATP-binding site is contributed by 606–613 (GPNMSGKS).

Belongs to the DNA mismatch repair MutS family.

In terms of biological role, this protein is involved in the repair of mismatches in DNA. It is possible that it carries out the mismatch recognition step. This protein has a weak ATPase activity. The polypeptide is DNA mismatch repair protein MutS (Oceanobacillus iheyensis (strain DSM 14371 / CIP 107618 / JCM 11309 / KCTC 3954 / HTE831)).